A 155-amino-acid polypeptide reads, in one-letter code: Cell division protein SepF (155 aa).

Residues 22–46 (RYVEEPEQRDERPALEKGRAPKEKQ) show a composition bias toward basic and acidic residues. The disordered stretch occupies residues 22–54 (RYVEEPEQRDERPALEKGRAPKEKQTAGMEQNQ).

It belongs to the SepF family. As to quaternary structure, homodimer. Interacts with FtsZ.

It localises to the cytoplasm. Functionally, cell division protein that is part of the divisome complex and is recruited early to the Z-ring. Probably stimulates Z-ring formation, perhaps through the cross-linking of FtsZ protofilaments. Its function overlaps with FtsA. In Shouchella clausii (strain KSM-K16) (Alkalihalobacillus clausii), this protein is Cell division protein SepF.